The chain runs to 498 residues: Glutamate--tRNA ligase (498 aa).

A 'HIGH' region motif is present at residues 11–21 (PSPTGHLHIGN). The 'KMSKS' region motif lies at 261–265 (KLSKR). Residue lysine 264 participates in ATP binding.

This sequence belongs to the class-I aminoacyl-tRNA synthetase family. Glutamate--tRNA ligase type 1 subfamily. Monomer.

The protein resides in the cytoplasm. It carries out the reaction tRNA(Glu) + L-glutamate + ATP = L-glutamyl-tRNA(Glu) + AMP + diphosphate. Catalyzes the attachment of glutamate to tRNA(Glu) in a two-step reaction: glutamate is first activated by ATP to form Glu-AMP and then transferred to the acceptor end of tRNA(Glu). The protein is Glutamate--tRNA ligase of Oenococcus oeni (strain ATCC BAA-331 / PSU-1).